We begin with the raw amino-acid sequence, 688 residues long: Homoaconitase, mitochondrial (688 aa).

The transit peptide at 1 to 19 (MALLYLSTRSSLKKTGARC) directs the protein to the mitochondrion. Positions 346, 406, and 409 each coordinate [4Fe-4S] cluster.

It belongs to the aconitase/IPM isomerase family. The cofactor is [4Fe-4S] cluster.

It is found in the mitochondrion. It carries out the reaction (2R,3S)-homoisocitrate = cis-homoaconitate + H2O. The protein operates within amino-acid biosynthesis; L-lysine biosynthesis via AAA pathway; L-alpha-aminoadipate from 2-oxoglutarate: step 3/5. Catalyzes the reversible hydration of cis-homoaconitate to (2R,3S)-homoisocitrate, a step in the alpha-aminoadipate pathway for lysine biosynthesis. The protein is Homoaconitase, mitochondrial (LYS4) of Debaryomyces hansenii (strain ATCC 36239 / CBS 767 / BCRC 21394 / JCM 1990 / NBRC 0083 / IGC 2968) (Yeast).